Reading from the N-terminus, the 359-residue chain is MITVNVDLGDRAYPIHIGAGLIGRTELFAPHINGSSVTIVTNTTVDPLYGDALRAALAPLGKRVSTVVLPDGEAYKNWETLNLIFDGLLTERADRKTTLIALGGGVIGDMTGFAAACYMRGVPFIQVPTTLLSQVDSSVGGKTGINHPLGKNMIGAFYQPQAVVADIGALATLPDRELAAGIAEVIKTGAIADAEFFDWIEANVDALNRREPAVLVHAVKRSCEIKASVVAADEREGGLRAILNFGHTFGHAIEAGLGYGEWLHGEAVGCGMVMAGDLSVRLGLLDEASRQRLDAVIAAARLPVSGPALGEARYMDLMRVDKKAEAGAIKFILLKRFGDTLIAPAPDEAVFATLAKTTR.

NAD(+) contacts are provided by residues 71–76 (DGEAYK), 105–109 (GVIGD), 129–130 (TT), Lys142, and Lys151. The Zn(2+) site is built by Glu184, His247, and His264.

Belongs to the sugar phosphate cyclases superfamily. Dehydroquinate synthase family. It depends on Co(2+) as a cofactor. Requires Zn(2+) as cofactor. NAD(+) serves as cofactor.

It is found in the cytoplasm. The catalysed reaction is 7-phospho-2-dehydro-3-deoxy-D-arabino-heptonate = 3-dehydroquinate + phosphate. Its pathway is metabolic intermediate biosynthesis; chorismate biosynthesis; chorismate from D-erythrose 4-phosphate and phosphoenolpyruvate: step 2/7. Functionally, catalyzes the conversion of 3-deoxy-D-arabino-heptulosonate 7-phosphate (DAHP) to dehydroquinate (DHQ). The chain is 3-dehydroquinate synthase from Burkholderia vietnamiensis (strain G4 / LMG 22486) (Burkholderia cepacia (strain R1808)).